Reading from the N-terminus, the 1145-residue chain is Trafficking protein particle complex subunit 10 (1145 aa).

The protein belongs to the TMEM1 family. As to quaternary structure, part of the multisubunit TRAPP (transport protein particle) complex. Interacts with Shal (via C-terminal dendritic targeting motif). As to expression, co-expressed with Shal in the nervous system.

Its subcellular location is the golgi apparatus. It localises to the cis-Golgi network. The protein localises to the cell projection. It is found in the dendrite. The protein resides in the perikaryon. In terms of biological role, may play a role in vesicular transport from endoplasmic reticulum to Golgi. Has a role in one of the several mechanisms underlying dendritic localization of Shal channels. The polypeptide is Trafficking protein particle complex subunit 10 (SIDL) (Drosophila melanogaster (Fruit fly)).